The chain runs to 72 residues: SPbeta prophage-derived uncharacterized protein YoqN (72 aa).

This chain is SPbeta prophage-derived uncharacterized protein YoqN (yoqN), found in Bacillus subtilis (strain 168).